We begin with the raw amino-acid sequence, 187 residues long: Protein GrpE (187 aa).

Residues 1–17 show a composition bias toward low complexity; that stretch reads MSNEEQQQPNPAAQAPE. Residues 1 to 27 form a disordered region; that stretch reads MSNEEQQQPNPAAQAPEGAVTEGAAPE.

Belongs to the GrpE family. In terms of assembly, homodimer.

The protein localises to the cytoplasm. Its function is as follows. Participates actively in the response to hyperosmotic and heat shock by preventing the aggregation of stress-denatured proteins, in association with DnaK and GrpE. It is the nucleotide exchange factor for DnaK and may function as a thermosensor. Unfolded proteins bind initially to DnaJ; upon interaction with the DnaJ-bound protein, DnaK hydrolyzes its bound ATP, resulting in the formation of a stable complex. GrpE releases ADP from DnaK; ATP binding to DnaK triggers the release of the substrate protein, thus completing the reaction cycle. Several rounds of ATP-dependent interactions between DnaJ, DnaK and GrpE are required for fully efficient folding. The polypeptide is Protein GrpE (Thioalkalivibrio sulfidiphilus (strain HL-EbGR7)).